Consider the following 277-residue polypeptide: 2-dehydro-3-deoxyphosphooctonate aldolase (277 aa).

This sequence belongs to the KdsA family.

The protein resides in the cytoplasm. It catalyses the reaction D-arabinose 5-phosphate + phosphoenolpyruvate + H2O = 3-deoxy-alpha-D-manno-2-octulosonate-8-phosphate + phosphate. It participates in carbohydrate biosynthesis; 3-deoxy-D-manno-octulosonate biosynthesis; 3-deoxy-D-manno-octulosonate from D-ribulose 5-phosphate: step 2/3. The protein operates within bacterial outer membrane biogenesis; lipopolysaccharide biosynthesis. This chain is 2-dehydro-3-deoxyphosphooctonate aldolase, found in Brucella melitensis biotype 2 (strain ATCC 23457).